The sequence spans 274 residues: Penicillin-insensitive murein endopeptidase (274 aa).

The N-terminal stretch at 1 to 19 (MNKTAIALLALLASSASLA) is a signal peptide. 3 disulfide bridges follow: C44-C265, C187-C235, and C216-C223. The Zn(2+) site is built by H110, H113, D120, D147, H150, and H211. The segment at 227-274 (PLPPPGDGCGAELQSWFEPPKPGTTKPEKKTPPPLPPSCQALLDEHVI) is disordered.

Belongs to the peptidase M74 family. As to quaternary structure, dimer. Zn(2+) is required as a cofactor.

The protein resides in the periplasm. Its function is as follows. Murein endopeptidase that cleaves the D-alanyl-meso-2,6-diamino-pimelyl amide bond that connects peptidoglycan strands. Likely plays a role in the removal of murein from the sacculus. The polypeptide is Penicillin-insensitive murein endopeptidase (Escherichia coli O17:K52:H18 (strain UMN026 / ExPEC)).